We begin with the raw amino-acid sequence, 248 residues long: tRNA uridine(34) hydroxylase (248 aa).

The region spanning T124 to N218 is the Rhodanese domain. The active-site Cysteine persulfide intermediate is the C178.

It belongs to the TrhO family.

The catalysed reaction is uridine(34) in tRNA + AH2 + O2 = 5-hydroxyuridine(34) in tRNA + A + H2O. In terms of biological role, catalyzes oxygen-dependent 5-hydroxyuridine (ho5U) modification at position 34 in tRNAs. This chain is tRNA uridine(34) hydroxylase, found in Rickettsia bellii (strain OSU 85-389).